A 358-amino-acid chain; its full sequence is MRDRLLAAEKVKAIDWRDDALYLLDQRVLPFEEVWHRYTTAAGVAEAIRTMVVRGAPAIGISAAYGAVLGARARIAEGGDWYPALEEDMQLLADSRPTAVNLFWALNRIRDRLMRVKNGDNPLAALEAEAVAIHLSDREANLTMAQLGADLIRKHQGNLQTVLTHCNTGALATGGFGTALGVIRAAHLEGMIERVYADETRPWLQGSRLTAWELANEGIPVTLNADSAAAHLMRTKGITWVIVGADRITANGDVANKIGTYQLAVAAMHHGVRFMVVAPSSTIDMEMASGDDIIIEERDGRELLEVGGQRVGADVEAFNPVFDVTPADLIDAIVTEKGIVERPDTARMAQLMSRKHLH.

Substrate is bound by residues 54 to 56 (RGA), R96, and Q205. The active-site Proton donor is the D246. 256–257 (NK) is a binding site for substrate.

Belongs to the eIF-2B alpha/beta/delta subunits family. MtnA subfamily.

The enzyme catalyses 5-(methylsulfanyl)-alpha-D-ribose 1-phosphate = 5-(methylsulfanyl)-D-ribulose 1-phosphate. It functions in the pathway amino-acid biosynthesis; L-methionine biosynthesis via salvage pathway; L-methionine from S-methyl-5-thio-alpha-D-ribose 1-phosphate: step 1/6. In terms of biological role, catalyzes the interconversion of methylthioribose-1-phosphate (MTR-1-P) into methylthioribulose-1-phosphate (MTRu-1-P). This is Methylthioribose-1-phosphate isomerase from Pseudomonas syringae pv. tomato (strain ATCC BAA-871 / DC3000).